A 121-amino-acid chain; its full sequence is Outer membrane lipoprotein BBA14 (121 aa).

The N-terminal stretch at 1-19 is a signal peptide; sequence MQIKNFPFLFLLNSLIIFS. Residue cysteine 20 is the site of N-palmitoyl cysteine attachment. Cysteine 20 carries S-diacylglycerol cysteine lipidation.

It localises to the cell outer membrane. In terms of biological role, outer membrane lipoprotein that could act as a component of a potential toxin-antitoxin system in B.burgdorferi which could serve as a plasmid stabilization mechanism in a growing bacterial population. The chain is Outer membrane lipoprotein BBA14 from Borreliella burgdorferi (strain ATCC 35210 / DSM 4680 / CIP 102532 / B31) (Borrelia burgdorferi).